Consider the following 147-residue polypeptide: Large ribosomal subunit protein uL15 (147 aa).

Residues 1-54 (MKLFELQPAPGSKKLPNRKGRGIGSGNGKTGGRGHKGQNARAGGGVRPGFEGGQ) form a disordered region. Composition is skewed to gly residues over residues 22 to 31 (GIGSGNGKTG) and 42 to 52 (AGGGVRPGFEG).

It belongs to the universal ribosomal protein uL15 family. In terms of assembly, part of the 50S ribosomal subunit.

Its function is as follows. Binds to the 23S rRNA. The chain is Large ribosomal subunit protein uL15 from Ruminiclostridium cellulolyticum (strain ATCC 35319 / DSM 5812 / JCM 6584 / H10) (Clostridium cellulolyticum).